We begin with the raw amino-acid sequence, 230 residues long: Probable tetraspanin tspD (230 aa).

The Cytoplasmic segment spans residues 1 to 20; the sequence is MVEYLPSTPRYLKVPLIILN. A helical transmembrane segment spans residues 21 to 41; it reads VILWLLGLVLVIIGGICVGFF. At 42–65 the chain is on the extracellular side; that stretch reads SRFKELQEVGGVSESIKSISVSLP. The helical transmembrane segment at 66–86 threads the bilayer; that stretch reads AGVLSIGIFFMVLTVAGCIVA. Residues 87-90 are Cytoplasmic-facing; the sequence is YKEK. The helical transmembrane segment at 91–111 threads the bilayer; it reads MVGLVFYTILMLVLLVVLIGI. The Extracellular segment spans residues 112–200; the sequence is GGEALTYHNA…VNSKLYLVGS (89 aa). N-linked (GlcNAc...) asparagine glycans are attached at residues N133, N138, N163, and N179. A helical transmembrane segment spans residues 201 to 221; the sequence is AGVAIGVIELVSLMFALFLIV. The Cytoplasmic portion of the chain corresponds to 222 to 230; it reads RLYKSNSYR.

Belongs to the tetraspanin (TM4SF) family.

Its subcellular location is the membrane. The polypeptide is Probable tetraspanin tspD (tspD) (Dictyostelium discoideum (Social amoeba)).